The sequence spans 631 residues: NADPH oxidoreductase A (631 aa).

The region spanning 73–212 (ILILYGTEYG…CFDRYIDTVC (140 aa)) is the Flavodoxin-like domain. Residues 79–83 (TEYGL) and 160–191 (VLAL…KRFR) contribute to the FMN site. Positions 247 to 480 (KKPYSSKLLV…INNNPDFRLP (234 aa)) constitute an FAD-binding FR-type domain. FAD is bound at residue 249-299 (PYSSKLLVKRVLTKGDKVGIHLEFELGDSELKYVPGDALAILPDNAASEVS). 504 to 630 (QERKALGHTG…KEKRYQKDVW (127 aa)) is an NADP(+) binding site.

The cofactor is FAD. It depends on FMN as a cofactor.

Functionally, probable NADPH oxidoreductase that controls development beyond the mound stage. The sequence is that of NADPH oxidoreductase A (redA) from Dictyostelium discoideum (Social amoeba).